A 275-amino-acid chain; its full sequence is Mitochondrial outer membrane protein porin (275 aa).

Position 1 is a blocked amino end (Met) (Met-1).

It belongs to the eukaryotic mitochondrial porin family. Highly divergent.

The protein localises to the mitochondrion outer membrane. Functionally, forms a channel of about 1,7 nM through the cell membrane that allows diffusion of small hydrophilic molecules. The channel adopts an open conformation at low or zero membrane potential and a closed conformation at potentials above 20 mv. The open state has a weak anion selectivity whereas the closed state is cation-selective. In Dictyostelium discoideum (Social amoeba), this protein is Mitochondrial outer membrane protein porin (porA).